The primary structure comprises 234 residues: Carboxy-S-adenosyl-L-methionine synthase (234 aa).

S-adenosyl-L-methionine-binding positions include Tyr35, 60–62 (GCS), 83–84 (DN), 109–110 (DI), Asn124, and Arg191.

This sequence belongs to the class I-like SAM-binding methyltransferase superfamily. Cx-SAM synthase family. In terms of assembly, homodimer.

It carries out the reaction prephenate + S-adenosyl-L-methionine = carboxy-S-adenosyl-L-methionine + 3-phenylpyruvate + H2O. Catalyzes the conversion of S-adenosyl-L-methionine (SAM) to carboxy-S-adenosyl-L-methionine (Cx-SAM). The chain is Carboxy-S-adenosyl-L-methionine synthase from Campylobacter hominis (strain ATCC BAA-381 / DSM 21671 / CCUG 45161 / LMG 19568 / NCTC 13146 / CH001A).